Consider the following 368-residue polypeptide: Germination protease (368 aa).

The propeptide occupies 1-16 (MKKSELDVNQYLIRTD).

The protein belongs to the peptidase A25 family. Homotetramer. Autoproteolytically processed. The inactive tetrameric zymogen termed p46 autoprocesses to a smaller form termed p41, which is active only during spore germination.

The catalysed reaction is Endopeptidase action with P4 Glu or Asp, P1 preferably Glu &gt; Asp, P1' hydrophobic and P2' Ala.. Functionally, initiates the degradation of small, acid-soluble proteins during spore germination. This Bacillus subtilis (strain 168) protein is Germination protease (gpr).